The primary structure comprises 471 residues: FAD-linked oxidoreductase sorD (471 aa).

A signal peptide spans 1–23 (MQAASAFATCLLASVGGNSSAVA). N18, N29, N174, N279, and N351 each carry an N-linked (GlcNAc...) asparagine glycan. One can recognise an FAD-binding PCMH-type domain in the interval 41 to 212 (LLTTPSAIVW…TDFSIRTEPV (172 aa)).

This sequence belongs to the oxygen-dependent FAD-linked oxidoreductase family. Requires FAD as cofactor.

Its pathway is secondary metabolite biosynthesis. Functionally, FAD-linked oxidoreductase; part of the gene cluster that mediates the biosynthesis of sorbicillinoids, a diverse group of yellow secondary metabolites that restrict growth of competing pathogenic fungi but not of bacteria. Sorbicillinoids biosynthesis requires the action of two PKSs. SorA iteratively combines three acetyl units and the growing chain is modified by the ketoacyl reductase subunit, and optional by the enoyl reductase subunit in the second cycle. The polyketide is then handed over to the PKS SorB, which adds three more acetyl units, and two methyl groups. SorB releases an aldehyde, which undergoes spontaneous cyclization resulting in the formation of sorbicillin or 2',3'-dihydrosorbicillin. The monooxygenase sorC oxidizes sorbicillin and 2',3'-dihydrosorbicillin to 2',3'-dihydrosorbicillinol and sorbicillinol, respectively. The oxidoreductase sorD further converts sorbicillinol into oxosorbicillinol. Sorbicillinol is the building block for the other sorbicillinoids such as disorbicillinol, bisvertinolon, and dihydrobisvertinolone. The polypeptide is FAD-linked oxidoreductase sorD (Penicillium rubens (strain ATCC 28089 / DSM 1075 / NRRL 1951 / Wisconsin 54-1255) (Penicillium chrysogenum)).